The primary structure comprises 308 residues: MISRFFRHLFEALKSLKRNGWMTVAAVSSVMITLTLVAIFASVIFNTAKLATDIENNVRVVVYIRKDVEDNSQTIEKEGQTVTNNDYHKVYDSLKNMSTVKSVTFSSKEEQYEKLTEIMGDNWKIFEGDANPLYDAYIVEANAPNDVKTIAEDAKKIEGVSEVQDGGANTERLFKLASFIRVWGLGIAALLIFIAVFLISNTIRITIISRSREIQIMRLVGAKNSYIRGPFLLEGAFIGLLGAIAPSVLVFIVYQIVYQSVNKSLVGQNLSMISPDLFSPLMIALLFVIGVFIGSLGSGISMRRFLKI.

The Cytoplasmic segment spans residues 1–24 (MISRFFRHLFEALKSLKRNGWMTV). The chain crosses the membrane as a helical span at residues 25–45 (AAVSSVMITLTLVAIFASVIF). At 46–178 (NTAKLATDIE…NTERLFKLAS (133 aa)) the chain is on the extracellular side. A helical membrane pass occupies residues 179–199 (FIRVWGLGIAALLIFIAVFLI). The Cytoplasmic segment spans residues 200-236 (SNTIRITIISRSREIQIMRLVGAKNSYIRGPFLLEGA). The chain crosses the membrane as a helical span at residues 237–257 (FIGLLGAIAPSVLVFIVYQIV). Residues 258-276 (YQSVNKSLVGQNLSMISPD) are Extracellular-facing. The helical transmembrane segment at 277 to 297 (LFSPLMIALLFVIGVFIGSLG) threads the bilayer. The Cytoplasmic segment spans residues 298–308 (SGISMRRFLKI).

Belongs to the ABC-4 integral membrane protein family. FtsX subfamily. As to quaternary structure, homodimer. Interacts with FtsE; forms a membrane-associated complex. Interacts (via large extracellular loop) with PcsB (via N-terminal coiled-coil domain). This interaction directs PcsB to equatorial and septal sites of dividing cells.

It localises to the cell membrane. Functionally, part of the ABC transporter FtsEX involved in asymmetric cellular division facilitating the initiation of sporulation. Required in maintaining normal growth and cellular morphology. The protein is Cell division protein FtsX of Streptococcus pneumoniae serotype 2 (strain D39 / NCTC 7466).